Reading from the N-terminus, the 188-residue chain is dCTP deaminase (188 aa).

DCTP is bound by residues 111 to 116, 135 to 137, Gln156, Tyr170, and Gln180; these read KSTYAR and TLE. Glu137 acts as the Proton donor/acceptor in catalysis.

This sequence belongs to the dCTP deaminase family. Homotrimer.

It catalyses the reaction dCTP + H2O + H(+) = dUTP + NH4(+). Its pathway is pyrimidine metabolism; dUMP biosynthesis; dUMP from dCTP (dUTP route): step 1/2. Its function is as follows. Catalyzes the deamination of dCTP to dUTP. This chain is dCTP deaminase, found in Pseudomonas fluorescens (strain SBW25).